Reading from the N-terminus, the 591-residue chain is Oxaloacetate decarboxylase alpha chain (591 aa).

Residues 3–263 form the Pyruvate carboxyltransferase domain; the sequence is IAITDVVLRD…DTGLDILKLE (261 aa). A Biotinyl-binding domain is found at 518–591; it reads PAGAGTPVTA…SVGDTLMTLA (74 aa). Residue Lys-557 is modified to N6-biotinyllysine.

In terms of assembly, composed of three chains (alpha, beta, and gamma). Requires biotin as cofactor.

The enzyme catalyses oxaloacetate + 2 Na(+)(in) + H(+) = pyruvate + 2 Na(+)(out) + CO2. In terms of biological role, catalyzes the decarboxylation of oxaloacetate coupled to Na(+) translocation. The polypeptide is Oxaloacetate decarboxylase alpha chain (oadA1) (Salmonella typhimurium (strain LT2 / SGSC1412 / ATCC 700720)).